A 181-amino-acid polypeptide reads, in one-letter code: Ribulose bisphosphate carboxylase small subunit, chloroplastic 1 (181 aa).

A chloroplast-targeting transit peptide spans 1-54 (MASSMLSSAAVVTSPAQATMVAPFTGLKSSSAFPVTRKANNDITSIVSNGGRVS).

The protein belongs to the RuBisCO small chain family. As to quaternary structure, heterohexadecamer of 8 large and 8 small subunits.

It is found in the plastid. Its subcellular location is the chloroplast. RuBisCO catalyzes two reactions: the carboxylation of D-ribulose 1,5-bisphosphate, the primary event in carbon dioxide fixation, as well as the oxidative fragmentation of the pentose substrate. Both reactions occur simultaneously and in competition at the same active site. Although the small subunit is not catalytic it is essential for maximal activity. In Brassica napus (Rape), this protein is Ribulose bisphosphate carboxylase small subunit, chloroplastic 1.